Reading from the N-terminus, the 340-residue chain is Serine racemase (340 aa).

Mg(2+) is bound at residue Glu13. Residues Ser31, Ser32, Ile33, Lys51, and Thr52 each coordinate ATP. Lys56 acts as the Proton acceptor in catalysis. Lys56 carries the N6-(pyridoxal phosphate)lysine modification. Ca(2+)-binding residues include Pro69 and Thr81. Ser84 serves as the catalytic Proton acceptor. Asn86 contributes to the pyridoxal 5'-phosphate binding site. Residue Gln89 participates in ATP binding. S-nitrosocysteine is present on Cys113. Residue Tyr121 coordinates ATP. A pyridoxal 5'-phosphate-binding site is contributed by Asn154. Asp178 is a Mg(2+) binding site. Pyridoxal 5'-phosphate-binding residues include Gly185, Gly186, Gly187, Gly188, and Met189. Mg(2+) contacts are provided by Glu210, Ala214, Asp216, and Asn247. Residues Glu210, Ala214, Asp216, and Asn247 each coordinate Ca(2+). Positions 210, 214, and 216 each coordinate Mn(2+). Lys279 serves as a coordination point for ATP. Ser313 contacts pyridoxal 5'-phosphate. Asn316 serves as a coordination point for ATP.

Belongs to the serine/threonine dehydratase family. In terms of assembly, homodimer. Mg(2+) serves as cofactor. It depends on Mn(2+) as a cofactor. Ca(2+) is required as a cofactor. Requires pyridoxal 5'-phosphate as cofactor. S-nitrosylated, leading to decrease the enzyme activity. Expressed in the cerebellum, hippocampus, dorsolateral prefrontal cortex, and in motor neurons and glial cells of the lumbar spinal cord (at protein level). Increased in the dorsolateral prefrontal cortex of schizophrenic patients (at protein level). Brain: expressed at high levels in hippocampus and corpus callosum, intermediate levels in substantia nigra and caudate, and low levels in amygdala, thalamus, and subthalamic nuclei. Expressed in heart, skeletal muscle, kidney, and liver.

It carries out the reaction L-serine = D-serine. It catalyses the reaction D-serine = pyruvate + NH4(+). The enzyme catalyses L-serine = pyruvate + NH4(+). Its activity is regulated as follows. Allosterically activated by magnesium, and possibly also other divalent metal cations. Allosterically activated by ATP, ADP or GTP. Competitively inhibited by malonate. Inhibited by meso-tartrate and malonate. In terms of biological role, catalyzes the synthesis of D-serine from L-serine. D-serine is a key coagonist with glutamate at NMDA receptors. Has dehydratase activity towards both L-serine and D-serine. In Homo sapiens (Human), this protein is Serine racemase (SRR).